Reading from the N-terminus, the 153-residue chain is Putative transmembrane protein INAFM2 (153 aa).

Over residues 1-23 (MKERDAAPAERGKPATYTGDKKA) the composition is skewed to basic and acidic residues. The tract at residues 1 to 24 (MKERDAAPAERGKPATYTGDKKAK) is disordered. A helical transmembrane segment spans residues 36–56 (LATVFAYVLSVSLAAIVLAVY). A disordered region spans residues 66-153 (AGTSGGAAGP…EETAAAPGSR (88 aa)). Residues 79–101 (GSNATGPSGTSGAAAAGPNTTGS) show a composition bias toward low complexity. The segment covering 118-131 (PAPPEPPADSPPAG) has biased composition (pro residues).

Its subcellular location is the membrane. In Homo sapiens (Human), this protein is Putative transmembrane protein INAFM2.